The chain runs to 1394 residues: DNA-directed RNA polymerase subunit beta'' (1394 aa).

Residues Cys-224, Cys-295, Cys-302, and Cys-305 each contribute to the Zn(2+) site.

It belongs to the RNA polymerase beta' chain family. RpoC2 subfamily. In terms of assembly, in plastids the minimal PEP RNA polymerase catalytic core is composed of four subunits: alpha, beta, beta', and beta''. When a (nuclear-encoded) sigma factor is associated with the core the holoenzyme is formed, which can initiate transcription. It depends on Zn(2+) as a cofactor.

Its subcellular location is the plastid. The protein localises to the chloroplast. The enzyme catalyses RNA(n) + a ribonucleoside 5'-triphosphate = RNA(n+1) + diphosphate. Functionally, DNA-dependent RNA polymerase catalyzes the transcription of DNA into RNA using the four ribonucleoside triphosphates as substrates. The chain is DNA-directed RNA polymerase subunit beta'' from Vitis vinifera (Grape).